Reading from the N-terminus, the 160-residue chain is SsrA-binding protein (160 aa).

The protein belongs to the SmpB family.

It localises to the cytoplasm. Required for rescue of stalled ribosomes mediated by trans-translation. Binds to transfer-messenger RNA (tmRNA), required for stable association of tmRNA with ribosomes. tmRNA and SmpB together mimic tRNA shape, replacing the anticodon stem-loop with SmpB. tmRNA is encoded by the ssrA gene; the 2 termini fold to resemble tRNA(Ala) and it encodes a 'tag peptide', a short internal open reading frame. During trans-translation Ala-aminoacylated tmRNA acts like a tRNA, entering the A-site of stalled ribosomes, displacing the stalled mRNA. The ribosome then switches to translate the ORF on the tmRNA; the nascent peptide is terminated with the 'tag peptide' encoded by the tmRNA and targeted for degradation. The ribosome is freed to recommence translation, which seems to be the essential function of trans-translation. In Cronobacter sakazakii (strain ATCC BAA-894) (Enterobacter sakazakii), this protein is SsrA-binding protein.